The chain runs to 736 residues: 3',5'-cyclic-AMP phosphodiesterase 4B (736 aa).

3 disordered regions span residues 51–78, 189–209, and 282–301; these read QLPP…TTLP, LHGT…SRVN, and KQND…KKKK. A Phosphoserine modification is found at S290. In terms of domain architecture, PDEase spans 330-659; it reads VNTENEDHLA…NWYQSMIPQS (330 aa). The Proton donor role is filled by H406. H406 contributes to the 3',5'-cyclic AMP binding site. AMP contacts are provided by H406 and H410. Residues H410, H446, D447, and D564 each coordinate Zn(2+). AMP contacts are provided by D447, D564, Q615, and F618. Mg(2+) is bound at residue D447. D447 is a Mn(2+) binding site. 2 residues coordinate 3',5'-cyclic AMP: Q615 and F618. Phosphoserine is present on residues S659 and S661. Residues 685–736 form a disordered region; it reads DEEDSEGPEKEGEGHSYFSSTKTLCVIDPENRDSLGETDIDIATEDKSPVDT.

This sequence belongs to the cyclic nucleotide phosphodiesterase family. PDE4 subfamily. In terms of assembly, interacts with DISC1. Requires Zn(2+) as cofactor. The cofactor is Mg(2+). It depends on Mn(2+) as a cofactor. As to expression, expressed in brain, heart, lung and skeletal muscle. Expressed in white blood cells. In terms of tissue distribution, brain-specific isoform.

The protein resides in the cytoplasm. It is found in the cell membrane. It catalyses the reaction 3',5'-cyclic AMP + H2O = AMP + H(+). It functions in the pathway purine metabolism; 3',5'-cyclic AMP degradation; AMP from 3',5'-cyclic AMP: step 1/1. Inhibited by rolipram. Functionally, hydrolyzes the second messenger cAMP, which is a key regulator of many important physiological processes. May be involved in mediating central nervous system effects of therapeutic agents ranging from antidepressants to antiasthmatic and anti-inflammatory agents. The protein is 3',5'-cyclic-AMP phosphodiesterase 4B of Homo sapiens (Human).